Consider the following 293-residue polypeptide: Elongation factor Ts (293 aa).

An involved in Mg(2+) ion dislocation from EF-Tu region spans residues 79 to 82 (TDFV).

It belongs to the EF-Ts family.

The protein localises to the cytoplasm. In terms of biological role, associates with the EF-Tu.GDP complex and induces the exchange of GDP to GTP. It remains bound to the aminoacyl-tRNA.EF-Tu.GTP complex up to the GTP hydrolysis stage on the ribosome. The sequence is that of Elongation factor Ts (tsf) from Halalkalibacterium halodurans (strain ATCC BAA-125 / DSM 18197 / FERM 7344 / JCM 9153 / C-125) (Bacillus halodurans).